Here is a 357-residue protein sequence, read N- to C-terminus: Protein phosphatase 1 regulatory subunit 42 (357 aa).

LRR repeat units lie at residues 29 to 50 (KITH…SLCR), 51 to 72 (NLSV…NYTT), 73 to 94 (NLTH…SSLK), 95 to 116 (KLEK…EGLE), 117 to 138 (ELRE…LFDP), 147 to 168 (SLST…EILE), and 169 to 190 (NLNH…ELLL). One can recognise an LRRCT domain in the interval 204-242 (NPVCLKPKYRDKLILTSKSLEFLDGKEIKDMERQFLMNW). Residues 329-357 (ESSLTKNDIHEPHLLQNPKVKENLSEKKE) form a disordered region. Over residues 335–357 (NDIHEPHLLQNPKVKENLSEKKE) the composition is skewed to basic and acidic residues.

In terms of assembly, interacts with PPP1CC isoform gamma-2; the interaction is direct. Interacts with actin, dynein, KIF5B, KIFC1 and tubulin. Associates with microtubules. Phosphorylated; during the first round of spermatogenesis with a marginal increase at 21 days after birth. Testis-specific. Expressed in spermatids (at protein level). Testis-specific.

The protein localises to the cytoplasm. It localises to the cytoskeleton. The protein resides in the microtubule organizing center. It is found in the centrosome. Its function is as follows. Regulates phosphatase activity of protein phosphatase 1 (PP1) complexes in the testis. The polypeptide is Protein phosphatase 1 regulatory subunit 42 (Ppp1r42) (Mus musculus (Mouse)).